The chain runs to 54 residues: uncharacterized protein (54 aa).

Residues 1–38 form a disordered region; the sequence is MFPNSNGPNKMKALVAPSNSSTTSKTNNNNLPPNGRSS. The segment covering 17 to 38 has biased composition (low complexity); that stretch reads PSNSSTTSKTNNNNLPPNGRSS.

This is an uncharacterized protein from Dictyostelium discoideum (Social amoeba).